We begin with the raw amino-acid sequence, 586 residues long: Zinc finger protein Eos (586 aa).

2 disordered regions span residues 1-42 (MHTP…APDF) and 68-98 (EKEF…SANS). Basic and acidic residues predominate over residues 25–34 (QGKDNLEREL). The segment covering 79-98 (SVSTPNSQHSSPSRSLSANS) has biased composition (polar residues). A Glycyl lysine isopeptide (Lys-Gly) (interchain with G-Cter in SUMO2) cross-link involves residue Lys100. Residue Ser105 is modified to Phosphoserine. 4 consecutive C2H2-type zinc fingers follow at residues 159-181 (LKCD…KRSH), 187-209 (FHCN…IKLH), 215-237 (FKCP…LRTH), and 248-271 (YKCN…ERCH). The interval 281–586 (AQALTGQPGD…HIVRGEHKVG (306 aa)) is interaction with FOXP3. Lys335 carries the post-translational modification N6-acetyllysine. Positions 413-490 (RLELPGSREA…QPPPTIVVGR (78 aa)) are disordered. Positions 423-433 (GEGPEDLGDGG) match the CTBP-binding motif PEDLG motif. Residues 476–485 (QGPPPQPPPT) are compositionally biased toward pro residues. Lys501 is covalently cross-linked (Glycyl lysine isopeptide (Lys-Gly) (interchain with G-Cter in SUMO2)). C2H2-type zinc fingers lie at residues 531-553 (FKCE…MGCH) and 559-583 (FECN…RGEH).

Belongs to the Ikaros C2H2-type zinc-finger protein family. In terms of assembly, self-associates. Interacts with other family members; IKZF1, IKZF2, IKZF3 and IKZF5. Interacts with CTBP2, SPI1 and MITF. Interacts with FOXP3 and CTBP1. As to expression, expressed mainly in the brain. Up-regulated in long term cultured astrocytes. Down-regulated during osteoclast differentiation.

The protein localises to the nucleus. DNA-binding protein that binds to the 5'GGGAATRCC-3' Ikaros-binding sequence. Interacts with SPI1 and MITF to repress transcription of the CTSK and ACP5 promoters via recruitment of corepressors SIN3A and CTBP2. May be involved in the development of central and peripheral nervous systems. Essential for the inhibitory function of regulatory T-cells (Treg). Mediates FOXP3-mediated gene silencing in regulatory T-cells (Treg) via recruitment of corepressor CTBP1. The sequence is that of Zinc finger protein Eos (Ikzf4) from Mus musculus (Mouse).